Consider the following 354-residue polypeptide: Protein RecA (354 aa).

67–74 (GPESSGKT) lines the ATP pocket. The interval 333 to 354 (MNEFVPSSEEQAEASLSEDHDQ) is disordered.

This sequence belongs to the RecA family.

It is found in the cytoplasm. Its function is as follows. Can catalyze the hydrolysis of ATP in the presence of single-stranded DNA, the ATP-dependent uptake of single-stranded DNA by duplex DNA, and the ATP-dependent hybridization of homologous single-stranded DNAs. It interacts with LexA causing its activation and leading to its autocatalytic cleavage. The chain is Protein RecA from Laribacter hongkongensis (strain HLHK9).